Consider the following 468-residue polypeptide: Neuronal acetylcholine receptor subunit alpha-5 (468 aa).

The N-terminal stretch at methionine 1–glycine 22 is a signal peptide. Topologically, residues arginine 23–threonine 254 are extracellular. N-linked (GlcNAc...) asparagine glycosylation is found at asparagine 155, asparagine 183, and asparagine 229. A disulfide bond links cysteine 170 and cysteine 184. Residues cysteine 234 and cysteine 235 are joined by a disulfide bond. 3 helical membrane-spanning segments follow: residues leucine 255–proline 275, isoleucine 282–isoleucine 302, and leucine 317–isoleucine 337. The Cytoplasmic segment spans residues histidine 338–arginine 429. Residues methionine 430–isoleucine 451 traverse the membrane as a helical segment. Over tyrosine 452–lysine 468 the chain is Extracellular.

This sequence belongs to the ligand-gated ion channel (TC 1.A.9) family. Acetylcholine receptor (TC 1.A.9.1) subfamily. Alpha-5/CHRNA5 sub-subfamily. Neuronal AChR that forms heteropentamers composed of two different type of subunits: alpha and non-alpha (beta). CHRNA5/alpha-5 subunit is only able to form functional nAChRs when co-assembled with another alpha subunit, can be combined to CHRNA4/alpha-4 or CHRNA3/alpha-3 and CHRNB4/beta-4 or CHRNB2/beta-2 to give rise to functional receptors. Interacts with LYPD6.

It is found in the synaptic cell membrane. The protein localises to the cell membrane. The enzyme catalyses Ca(2+)(in) = Ca(2+)(out). The catalysed reaction is K(+)(in) = K(+)(out). It catalyses the reaction Na(+)(in) = Na(+)(out). Activated by a myriad of ligands such as acetylcholine, cytisine, nicotine, choline and epibatidine. Functionally, component of neuronal acetylcholine receptors (nAChRs) that function as pentameric, ligand-gated cation channels with high calcium permeability among other activities. nAChRs are excitatory neurotrasnmitter receptors formed by a collection of nAChR subunits known to mediate synaptic transmission in the nervous system and the neuromuscular junction. Each nAchR subunit confers differential attributes to channel properties, including activation, deactivation and desensitization kinetics, pH sensitivity, cation permeability, and binding to allosteric modulators. Has an accessory rather than functional role and is only able to form functional nAChRs when co-assembled with another beta subunit. Participates in pentameric assemblies along with CHRNA3, CHRNA4, CHRNB2 and CHRNB4. Increases receptor sensitivity to acetylcholine and nicotine when associated with CHRNA4 and CHRNB2. Plays a role in nicotine addiction. The protein is Neuronal acetylcholine receptor subunit alpha-5 (CHRNA5) of Pan troglodytes (Chimpanzee).